Reading from the N-terminus, the 950-residue chain is Leucine--tRNA ligase (950 aa).

Residues 72–83 carry the 'HIGH' region motif; the sequence is PYPSGEGLHVGH. Positions 722–726 match the 'KMSKS' region motif; that stretch reads KIGKS. K725 lines the ATP pocket.

Belongs to the class-I aminoacyl-tRNA synthetase family.

It is found in the cytoplasm. It catalyses the reaction tRNA(Leu) + L-leucine + ATP = L-leucyl-tRNA(Leu) + AMP + diphosphate. This chain is Leucine--tRNA ligase, found in Mycobacterium sp. (strain JLS).